The chain runs to 206 residues: Large ribosomal subunit protein uL4 (206 aa).

The segment at threonine 47–arginine 71 is disordered.

This sequence belongs to the universal ribosomal protein uL4 family. As to quaternary structure, part of the 50S ribosomal subunit.

One of the primary rRNA binding proteins, this protein initially binds near the 5'-end of the 23S rRNA. It is important during the early stages of 50S assembly. It makes multiple contacts with different domains of the 23S rRNA in the assembled 50S subunit and ribosome. In terms of biological role, forms part of the polypeptide exit tunnel. The protein is Large ribosomal subunit protein uL4 of Nitrosomonas eutropha (strain DSM 101675 / C91 / Nm57).